The primary structure comprises 495 residues: MTGGALLVAGTTSDAGKSMVVAGLCRLLARKGVRVAPFKAQNMSNNSAVTVDGGEIGRAQAMQARAAGLDPSVRFNPVLLKPGSDRTSQLVVRGRVTGTVSATDYITHRDRLADVVADELASLRAEFDVVLCEGAGSPAEINLRRTDLANMGLARRAHLPVIVVGDIDRGGVLAHLFGTVAVLHPDDQALIAGFVVNKFRGDPTLLAPGLDQLHDLTGRPTYGVIPYSDELWMDTEDSVSVVAGRTIGRPTPPRGADGLRVAAVRLPRISNSTDIEALACEPGVTVRWVTDPADVADADVVVLPGTKATVADLQWLRTAGLAEPIAAHAGAGRPLLGICGGFQMLCRHIDDAVESRAGRVDGLGLLDADIAFAAEKTLRHRTTPLQGYEIHHGQVTRCAADDWAGIGVRRDAVYGTHWHGLFDNDGFRRAWLADAAAAAGRSGFVVADDIDVSARRDAQLDVMADLLQNHLDLDAALGLVDAGPPPRPTISTGIT.

The region spanning 258 to 427 (GLRVAAVRLP…WHGLFDNDGF (170 aa)) is the GATase cobBQ-type domain. Catalysis depends on Cys-339, which acts as the Nucleophile. His-419 is an active-site residue.

The protein belongs to the CobB/CobQ family. CobQ subfamily.

The protein operates within cofactor biosynthesis; adenosylcobalamin biosynthesis. Functionally, catalyzes amidations at positions B, D, E, and G on adenosylcobyrinic A,C-diamide. NH(2) groups are provided by glutamine, and one molecule of ATP is hydrogenolyzed for each amidation. The sequence is that of Cobyric acid synthase from Mycobacterium sp. (strain KMS).